A 442-amino-acid chain; its full sequence is UDP-N-acetylmuramoylalanine--D-glutamate ligase (442 aa).

113-119 (GSNGKTT) contributes to the ATP binding site.

The protein belongs to the MurCDEF family.

The protein localises to the cytoplasm. The enzyme catalyses UDP-N-acetyl-alpha-D-muramoyl-L-alanine + D-glutamate + ATP = UDP-N-acetyl-alpha-D-muramoyl-L-alanyl-D-glutamate + ADP + phosphate + H(+). It functions in the pathway cell wall biogenesis; peptidoglycan biosynthesis. Cell wall formation. Catalyzes the addition of glutamate to the nucleotide precursor UDP-N-acetylmuramoyl-L-alanine (UMA). This Coxiella burnetii (strain CbuK_Q154) (Coxiella burnetii (strain Q154)) protein is UDP-N-acetylmuramoylalanine--D-glutamate ligase.